Consider the following 312-residue polypeptide: Very-long-chain 3-oxoacyl-CoA reductase (312 aa).

A helical transmembrane segment spans residues Ala-4 to Leu-24. Position 50-79 (Gly-50–Leu-79) interacts with NADP(+). Transmembrane regions (helical) follow at residues Gly-182–Tyr-202 and Thr-269–Met-285. Ser-189 lines the substrate pocket. The active-site Proton acceptor is Tyr-202. The short motif at Lys-308–Asn-312 is the Di-lysine motif element.

Belongs to the short-chain dehydrogenases/reductases (SDR) family. 17-beta-HSD 3 subfamily. Expressed in most tissues tested.

Its subcellular location is the endoplasmic reticulum membrane. It carries out the reaction a very-long-chain (3R)-3-hydroxyacyl-CoA + NADP(+) = a very-long-chain 3-oxoacyl-CoA + NADPH + H(+). The enzyme catalyses 17beta-estradiol + NAD(+) = estrone + NADH + H(+). The catalysed reaction is 17beta-estradiol + NADP(+) = estrone + NADPH + H(+). It catalyses the reaction 3-oxooctadecanoyl-CoA + NADPH + H(+) = (3R)-hydroxyoctadecanoyl-CoA + NADP(+). It carries out the reaction (7Z,10Z,13Z,16Z)-3-oxodocosatetraenoyl-CoA + NADPH + H(+) = (3R)-hydroxy-(7Z,10Z,13Z,16Z)-docosatetraenoyl-CoA + NADP(+). The enzyme catalyses 3-oxo-(7Z,10Z,13Z,16Z,19Z)-docosapentaenoyl-CoA + NADPH + H(+) = (3R)-hydroxy-(7Z,10Z,13Z,16Z,19Z)-docosapentaenoyl-CoA + NADP(+). The catalysed reaction is (8Z,11Z,14Z)-3-oxoeicosatrienoyl-CoA + NADPH + H(+) = (3R)-hydroxy-(8Z,11Z,14Z)-eicosatrienoyl-CoA + NADP(+). It participates in lipid metabolism; fatty acid biosynthesis. The protein operates within steroid biosynthesis; estrogen biosynthesis. Catalyzes the second of the four reactions of the long-chain fatty acids elongation cycle. This endoplasmic reticulum-bound enzymatic process, allows the addition of two carbons to the chain of long- and very long-chain fatty acids/VLCFAs per cycle. This enzyme has a 3-ketoacyl-CoA reductase activity, reducing 3-ketoacyl-CoA to 3-hydroxyacyl-CoA, within each cycle of fatty acid elongation. Thereby, it may participate in the production of VLCFAs of different chain lengths that are involved in multiple biological processes as precursors of membrane lipids and lipid mediators. May also catalyze the transformation of estrone (E1) into estradiol (E2) and play a role in estrogen formation. The sequence is that of Very-long-chain 3-oxoacyl-CoA reductase from Mus musculus (Mouse).